Here is a 186-residue protein sequence, read N- to C-terminus: Large ribosomal subunit protein uL5 (186 aa).

This sequence belongs to the universal ribosomal protein uL5 family. As to quaternary structure, part of the 50S ribosomal subunit; contacts the 5S rRNA and probably tRNA. Forms a bridge to the 30S subunit in the 70S ribosome.

Its function is as follows. This is one of the proteins that bind and probably mediate the attachment of the 5S RNA into the large ribosomal subunit, where it forms part of the central protuberance. In the 70S ribosome it contacts protein S13 of the 30S subunit (bridge B1b), connecting the 2 subunits; this bridge is implicated in subunit movement. May contact the P site tRNA; the 5S rRNA and some of its associated proteins might help stabilize positioning of ribosome-bound tRNAs. This chain is Large ribosomal subunit protein uL5, found in Pyrococcus furiosus (strain ATCC 43587 / DSM 3638 / JCM 8422 / Vc1).